Here is a 498-residue protein sequence, read N- to C-terminus: Probable malate:quinone oxidoreductase (498 aa).

It belongs to the MQO family. It depends on FAD as a cofactor.

It catalyses the reaction (S)-malate + a quinone = a quinol + oxaloacetate. Its pathway is carbohydrate metabolism; tricarboxylic acid cycle; oxaloacetate from (S)-malate (quinone route): step 1/1. The sequence is that of Probable malate:quinone oxidoreductase from Prochlorococcus marinus (strain AS9601).